We begin with the raw amino-acid sequence, 179 residues long: Large ribosomal subunit protein uL5 (179 aa).

The protein belongs to the universal ribosomal protein uL5 family. Part of the 50S ribosomal subunit; part of the 5S rRNA/L5/L18/L25 subcomplex. Contacts the 5S rRNA and the P site tRNA. Forms a bridge to the 30S subunit in the 70S ribosome.

This is one of the proteins that bind and probably mediate the attachment of the 5S RNA into the large ribosomal subunit, where it forms part of the central protuberance. In the 70S ribosome it contacts protein S13 of the 30S subunit (bridge B1b), connecting the 2 subunits; this bridge is implicated in subunit movement. Contacts the P site tRNA; the 5S rRNA and some of its associated proteins might help stabilize positioning of ribosome-bound tRNAs. The chain is Large ribosomal subunit protein uL5 from Dictyoglomus thermophilum (strain ATCC 35947 / DSM 3960 / H-6-12).